A 690-amino-acid chain; its full sequence is DNA ligase (690 aa).

Residues 49–53, 98–99, and Glu129 contribute to the NAD(+) site; these read DAEYD and SL. The N6-AMP-lysine intermediate role is filled by Lys131. NAD(+) is bound by residues Arg152, Glu191, Lys308, and Lys332. Cys426, Cys429, Cys444, and Cys450 together coordinate Zn(2+). Residues 607-690 form the BRCT domain; the sequence is EDAARLEGLT…ALLREQGIDA (84 aa).

This sequence belongs to the NAD-dependent DNA ligase family. LigA subfamily. The cofactor is Mg(2+). It depends on Mn(2+) as a cofactor.

The catalysed reaction is NAD(+) + (deoxyribonucleotide)n-3'-hydroxyl + 5'-phospho-(deoxyribonucleotide)m = (deoxyribonucleotide)n+m + AMP + beta-nicotinamide D-nucleotide.. DNA ligase that catalyzes the formation of phosphodiester linkages between 5'-phosphoryl and 3'-hydroxyl groups in double-stranded DNA using NAD as a coenzyme and as the energy source for the reaction. It is essential for DNA replication and repair of damaged DNA. The chain is DNA ligase from Salinibacter ruber (strain DSM 13855 / M31).